The following is a 236-amino-acid chain: 1-(5-phosphoribosyl)-5-[(5-phosphoribosylamino)methylideneamino] imidazole-4-carboxamide isomerase (236 aa).

Asp-8 (proton acceptor) is an active-site residue. The active-site Proton donor is the Asp-129.

Belongs to the HisA/HisF family.

Its subcellular location is the cytoplasm. The catalysed reaction is 1-(5-phospho-beta-D-ribosyl)-5-[(5-phospho-beta-D-ribosylamino)methylideneamino]imidazole-4-carboxamide = 5-[(5-phospho-1-deoxy-D-ribulos-1-ylimino)methylamino]-1-(5-phospho-beta-D-ribosyl)imidazole-4-carboxamide. Its pathway is amino-acid biosynthesis; L-histidine biosynthesis; L-histidine from 5-phospho-alpha-D-ribose 1-diphosphate: step 4/9. The chain is 1-(5-phosphoribosyl)-5-[(5-phosphoribosylamino)methylideneamino] imidazole-4-carboxamide isomerase from Methanosphaerula palustris (strain ATCC BAA-1556 / DSM 19958 / E1-9c).